Consider the following 506-residue polypeptide: PHD finger protein 10 (506 aa).

Disordered regions lie at residues 1–66 (MAAV…QDFG) and 293–377 (DPEL…SVSG). The span at 23-35 (VKEDNSNDTKDPE) shows a compositional bias: basic and acidic residues. The segment covering 52–66 (GDSTPSCENSNQDFG) has biased composition (polar residues). The interval 90 to 299 (MLQEQVSEYL…DPLDPELLAL (210 aa)) is SAY. Residues 326-338 (SIDSSSMNMSESD) show a composition bias toward low complexity. The span at 353–367 (KVKEKSSTPRKEGSK) shows a compositional bias: basic and acidic residues. Residues 387-444 (ICGICLKGKDANKKGRSERLIHCSQCDNSGHPSCLDMSAELVAVIKKYPWQCMECKTC) form a PHD-type 1; degenerate zinc finger. The PHD-type 2; degenerate zinc-finger motif lies at 446–489 (ICGQPHHEEEMMFCDTCDRGYHTFCVGLGALPSGRWICDCCQKV).

The protein belongs to the SAYP family. As to quaternary structure, component of neural progenitors-specific chromatin remodeling complex (npBAF complex), a subfamily of ATP-dependent SWI/SNF chromatin remodeling complexes.

Its subcellular location is the nucleus. Its function is as follows. Involved in transcription activity regulation by chromatin remodeling in the context of the neural progenitors-specific chromatin remodeling complex (npBAF complex). May play a role in the proliferation of neural progenitors. The sequence is that of PHD finger protein 10 (phf10) from Xenopus laevis (African clawed frog).